The chain runs to 423 residues: Polyglutamylase complex subunit TTLL1 (423 aa).

The TTL domain occupies 1–367 (MAGKVKWVTD…NGEIPDCKWN (367 aa)). ATP contacts are provided by residues lysine 138, 144–145 (QG), 181–184 (SLYI), and 194–196 (KFD). Glutamine 144 contacts a protein. Position 220 (arginine 220) interacts with L-glutamate. 241 to 242 (TN) contacts ATP. Lysine 259 is an L-glutamate binding site. Positions 313, 326, and 328 each coordinate Mg(2+). Lysine 344 provides a ligand contact to L-glutamate. The interval 391–423 (GAERELRSRPGQSLGPKGSRLRDAGRTVLTTWK) is disordered.

This sequence belongs to the tubulin polyglutamylase family. Part of the neuronal tubulin polyglutamylase complex which contains TPGS1, TPGS2, TTLL1, LRRC49 and NICN1. Interacts with PCM1, CSTPP1 and LRRC49. The cofactor is Mg(2+).

The protein resides in the cytoplasm. It is found in the cytoskeleton. The protein localises to the cilium basal body. It localises to the cilium axoneme. Its subcellular location is the cell projection. The protein resides in the cilium. It is found in the flagellum. It catalyses the reaction (L-glutamyl)(n)-gamma-L-glutamyl-L-glutamyl-[protein] + L-glutamate + ATP = (L-glutamyl)(n+1)-gamma-L-glutamyl-L-glutamyl-[protein] + ADP + phosphate + H(+). Functionally, catalytic subunit of a polyglutamylase complex which modifies tubulin, generating side chains of glutamate on the gamma-carboxyl group of specific glutamate residues within the C-terminal tail of tubulin. Probably involved in the side-chain elongation step of the polyglutamylation reaction rather than the initiation step. Modifies both alpha- and beta-tubulins with a preference for the alpha-tail. Unlike most polyglutamylases of the tubulin--tyrosine ligase family, only displays a catalytic activity when in complex with other proteins as it is most likely lacking domains important for autonomous activity. Part of the neuronal tubulin polyglutamylase complex. Mediates cilia and flagella polyglutamylation which is essential for their biogenesis and motility. Involved in respiratory motile cilia function through the regulation of beating asymmetry. Essential for sperm flagella biogenesis, motility and male fertility. Involved in KLF4 glutamylation which impedes its ubiquitination, thereby leading to somatic cell reprogramming, pluripotency maintenance and embryogenesis. The protein is Polyglutamylase complex subunit TTLL1 (TTLL1) of Bos taurus (Bovine).